Consider the following 719-residue polypeptide: DNA ligase (719 aa).

Residues 42 to 46 (DAAYD), 92 to 93 (SL), and Glu-126 contribute to the NAD(+) site. Lys-128 acts as the N6-AMP-lysine intermediate in catalysis. Positions 149, 185, 301, and 325 each coordinate NAD(+). The Zn(2+) site is built by Cys-430, Cys-433, Cys-448, and Cys-454. The BRCT domain maps to 640–719 (ATGSPVEGKT…DDWFKLVGED (80 aa)).

Belongs to the NAD-dependent DNA ligase family. LigA subfamily. Mg(2+) is required as a cofactor. Requires Mn(2+) as cofactor.

It catalyses the reaction NAD(+) + (deoxyribonucleotide)n-3'-hydroxyl + 5'-phospho-(deoxyribonucleotide)m = (deoxyribonucleotide)n+m + AMP + beta-nicotinamide D-nucleotide.. Its function is as follows. DNA ligase that catalyzes the formation of phosphodiester linkages between 5'-phosphoryl and 3'-hydroxyl groups in double-stranded DNA using NAD as a coenzyme and as the energy source for the reaction. It is essential for DNA replication and repair of damaged DNA. This Brucella ovis (strain ATCC 25840 / 63/290 / NCTC 10512) protein is DNA ligase.